The chain runs to 363 residues: Bonnadiene synthase (363 aa).

5 residues coordinate Mg(2+): aspartate 93, aspartate 98, asparagine 234, serine 238, and glutamate 242.

This sequence belongs to the terpene synthase family. It depends on Mg(2+) as a cofactor.

The enzyme catalyses (2E,6E,10E)-geranylgeranyl diphosphate = bonnadiene + diphosphate. The protein operates within secondary metabolite biosynthesis; terpenoid biosynthesis. In terms of biological role, diterpene synthase that catalyzes the conversion of geranylgeranyl diphosphate (GGPP) to bonnadiene. Cannot use geranyl diphosphate (GPP), farnesyl diphosphate (FPP) and geranylfarnesyl diphosphate (GFPP). The chain is Bonnadiene synthase from Allokutzneria albata (Kibdelosporangium albatum).